The sequence spans 200 residues: NAD(P)H dehydrogenase (quinone) (200 aa).

The Flavodoxin-like domain maps to 4–191 (VLVLYYSSYG…DIARYQGKHV (188 aa)). Residues 10-15 (SSYGHV) and 79-81 (TRF) contribute to the FMN site. Residue Y12 coordinates NAD(+). W99 serves as a coordination point for substrate. Residues 114 to 120 (STGTQHG) and H135 contribute to the FMN site.

The protein belongs to the WrbA family. The cofactor is FMN.

The catalysed reaction is a quinone + NADH + H(+) = a quinol + NAD(+). It catalyses the reaction a quinone + NADPH + H(+) = a quinol + NADP(+). This Burkholderia vietnamiensis (strain G4 / LMG 22486) (Burkholderia cepacia (strain R1808)) protein is NAD(P)H dehydrogenase (quinone).